The chain runs to 309 residues: MFWKKDPTVSWERKNINDIDFSRFNVAIIGGTGGLGRAISRELAQRNARVTVVGQTFRDEDLKDKINFVKADLSLVSECKRISHSDEIPYEELTHLIFTTGIFASRQRQATSEGLEKDMAVSYLSRYIIFHDVAKRLGISRTKKDDLPKVFIAGFPGNGQVGDPDDLNSDEKKYSAYATHMNTVAANESLVIDAKDRYTNIDTFGLNPGLIKTNIRNNLLGSDTYLSRITEWIISWTCQSAETYAKTICTLIASPAIESRSGTMFSNKGDAILPSPGLTKDVVEKFMENSELLVEKALRNQSPFTSSNE.

Residues 23-39 form a helical membrane-spanning segment; that stretch reads RFNVAIIGGTGGLGRAI.

Belongs to the NmrA-type oxidoreductase family.

The protein localises to the membrane. This is an uncharacterized protein from Saccharomyces cerevisiae (strain ATCC 204508 / S288c) (Baker's yeast).